The sequence spans 103 residues: Small ribosomal subunit protein uS10 (103 aa).

Belongs to the universal ribosomal protein uS10 family. In terms of assembly, part of the 30S ribosomal subunit.

Its function is as follows. Involved in the binding of tRNA to the ribosomes. This Neisseria gonorrhoeae protein is Small ribosomal subunit protein uS10.